Consider the following 145-residue polypeptide: Mannitol-specific phosphotransferase enzyme IIA component (145 aa).

The region spanning proline 4 to valine 144 is the PTS EIIA type-2 domain. Residue histidine 64 is the Tele-phosphohistidine intermediate of the active site. At histidine 64 the chain carries Phosphohistidine; by HPr.

The protein resides in the cytoplasm. In terms of biological role, the phosphoenolpyruvate-dependent sugar phosphotransferase system (sugar PTS), a major carbohydrate active transport system, catalyzes the phosphorylation of incoming sugar substrates concomitantly with their translocation across the cell membrane. The enzyme II CmtAB PTS system is involved in D-mannitol transport. The sequence is that of Mannitol-specific phosphotransferase enzyme IIA component from Geobacillus stearothermophilus (Bacillus stearothermophilus).